The primary structure comprises 315 residues: Bifunctional pinoresinol-lariciresinol reductase (315 aa).

Residues 14–20 (GGTGYLG), Arg39, and Lys48 contribute to the NADP(+) site. The active-site Proton acceptor is the Lys142. Residue Arg146 coordinates NADP(+). His274 is a substrate binding site.

It belongs to the NmrA-type oxidoreductase family. Isoflavone reductase subfamily. As to quaternary structure, dimer.

The catalysed reaction is (+)-lariciresinol + NADP(+) = (+)-pinoresinol + NADPH + H(+). It carries out the reaction (-)-secoisolariciresinol + NADP(+) = (+)-lariciresinol + NADPH + H(+). In terms of biological role, reductase involved in lignan (-)-hinokinin biosynthesis. Catalyzes the enantioselective conversion of (+)-pinoresinol into (+)-lariciresinol and of (+)-lariciresinol into (-)-secoisolariciresinol. Abstracts the 4R-hydride from the NADPH cofactor during catalysis. Has also a low phenylcoumaran benzylic ether reductase activity. The polypeptide is Bifunctional pinoresinol-lariciresinol reductase (PLR_Lc1) (Linum corymbulosum (Linum)).